A 68-amino-acid polypeptide reads, in one-letter code: ATP synthase F(0) complex subunit 8 (68 aa).

A helical transmembrane segment spans residues T8 to F24. K54 carries the N6-acetyllysine; alternate modification. The residue at position 54 (K54) is an N6-succinyllysine; alternate. Residue K57 is modified to N6-acetyllysine.

The protein belongs to the ATPase protein 8 family. As to quaternary structure, component of the ATP synthase complex composed at least of ATP5F1A/subunit alpha, ATP5F1B/subunit beta, ATP5MC1/subunit c (homooctomer), MT-ATP6/subunit a, MT-ATP8/subunit 8, ATP5ME/subunit e, ATP5MF/subunit f, ATP5MG/subunit g, ATP5MK/subunit k, ATP5MJ/subunit j, ATP5F1C/subunit gamma, ATP5F1D/subunit delta, ATP5F1E/subunit epsilon, ATP5PF/subunit F6, ATP5PB/subunit b, ATP5PD/subunit d, ATP5PO/subunit OSCP. ATP synthase complex consists of a soluble F(1) head domain (subunits alpha(3) and beta(3)) - the catalytic core - and a membrane F(0) domain - the membrane proton channel (subunits c, a, 8, e, f, g, k and j). These two domains are linked by a central stalk (subunits gamma, delta, and epsilon) rotating inside the F1 region and a stationary peripheral stalk (subunits F6, b, d, and OSCP). Interacts with PRICKLE3.

The protein resides in the mitochondrion membrane. Functionally, subunit 8, of the mitochondrial membrane ATP synthase complex (F(1)F(0) ATP synthase or Complex V) that produces ATP from ADP in the presence of a proton gradient across the membrane which is generated by electron transport complexes of the respiratory chain. ATP synthase complex consist of a soluble F(1) head domain - the catalytic core - and a membrane F(1) domain - the membrane proton channel. These two domains are linked by a central stalk rotating inside the F(1) region and a stationary peripheral stalk. During catalysis, ATP synthesis in the catalytic domain of F(1) is coupled via a rotary mechanism of the central stalk subunits to proton translocation. In vivo, can only synthesize ATP although its ATP hydrolase activity can be activated artificially in vitro. Part of the complex F(0) domain. The protein is ATP synthase F(0) complex subunit 8 of Lemur catta (Ring-tailed lemur).